A 37-amino-acid chain; its full sequence is Large ribosomal subunit protein bL36 (37 aa).

This sequence belongs to the bacterial ribosomal protein bL36 family.

This is Large ribosomal subunit protein bL36 from Natranaerobius thermophilus (strain ATCC BAA-1301 / DSM 18059 / JW/NM-WN-LF).